A 354-amino-acid chain; its full sequence is Methionine import ATP-binding protein MetN (354 aa).

The ABC transporter domain maps to 8 to 250; the sequence is LDHIDITFRQ…PKEALTQEFI (243 aa). 42 to 49 serves as a coordination point for ATP; sequence GYSGAGKS.

The protein belongs to the ABC transporter superfamily. Methionine importer (TC 3.A.1.24) family. In terms of assembly, the complex is composed of two ATP-binding proteins (MetN), two transmembrane proteins (MetI) and a solute-binding protein (MetQ).

It is found in the cell membrane. The catalysed reaction is L-methionine(out) + ATP + H2O = L-methionine(in) + ADP + phosphate + H(+). It catalyses the reaction D-methionine(out) + ATP + H2O = D-methionine(in) + ADP + phosphate + H(+). Functionally, part of the ABC transporter complex MetNIQ involved in methionine import. Responsible for energy coupling to the transport system. This chain is Methionine import ATP-binding protein MetN, found in Streptococcus pyogenes serotype M2 (strain MGAS10270).